A 235-amino-acid chain; its full sequence is Phosphoribosylaminoimidazole-succinocarboxamide synthase (235 aa).

It belongs to the SAICAR synthetase family.

The catalysed reaction is 5-amino-1-(5-phospho-D-ribosyl)imidazole-4-carboxylate + L-aspartate + ATP = (2S)-2-[5-amino-1-(5-phospho-beta-D-ribosyl)imidazole-4-carboxamido]succinate + ADP + phosphate + 2 H(+). It functions in the pathway purine metabolism; IMP biosynthesis via de novo pathway; 5-amino-1-(5-phospho-D-ribosyl)imidazole-4-carboxamide from 5-amino-1-(5-phospho-D-ribosyl)imidazole-4-carboxylate: step 1/2. The polypeptide is Phosphoribosylaminoimidazole-succinocarboxamide synthase (Streptococcus thermophilus (strain ATCC BAA-491 / LMD-9)).